Consider the following 407-residue polypeptide: Negative RAS protein regulator protein (407 aa).

Disordered stretches follow at residues 51 to 94 (PRII…ARQI), 165 to 187 (HPSK…NLNF), and 241 to 273 (NNNN…NVFS). Low complexity predominate over residues 55 to 73 (SSSNSNSNSNSNSNSNSNS). A Myb-like domain is found at 90 to 158 (SARQIRKKWK…QCHDRFKVLY (69 aa)). A compositionally biased stretch (basic residues) spans 165-177 (HPSKKSKQKKKKS). Residues 241–270 (NNNNNNINNSNNSNNNNSNNINRNSNHSTN) are compositionally biased toward low complexity.

Its subcellular location is the nucleus. In terms of biological role, negative regulator of the Ras-cyclic AMP pathway. Negatively regulate the activity of normal but not mutationally activated Ras proteins. The down-regulatory effect of RPI1 requires the presence of one of the two Ras GTPase activators, IRA1 and IRA2. The polypeptide is Negative RAS protein regulator protein (RPI1) (Saccharomyces cerevisiae (strain ATCC 204508 / S288c) (Baker's yeast)).